A 211-amino-acid polypeptide reads, in one-letter code: ATP-dependent dethiobiotin synthetase BioD (211 aa).

G13–V18 lines the ATP pocket. Position 17 (T17) interacts with Mg(2+). K33 is a catalytic residue. Mg(2+) is bound by residues C47 and E101. Residues E101–G104, P185–L187, and N192 each bind ATP.

It belongs to the dethiobiotin synthetase family. As to quaternary structure, homodimer. Mg(2+) serves as cofactor.

The protein resides in the cytoplasm. It catalyses the reaction (7R,8S)-7,8-diammoniononanoate + CO2 + ATP = (4R,5S)-dethiobiotin + ADP + phosphate + 3 H(+). It functions in the pathway cofactor biosynthesis; biotin biosynthesis; biotin from 7,8-diaminononanoate: step 1/2. Its function is as follows. Catalyzes a mechanistically unusual reaction, the ATP-dependent insertion of CO2 between the N7 and N8 nitrogen atoms of 7,8-diaminopelargonic acid (DAPA, also called 7,8-diammoniononanoate) to form a ureido ring. The chain is ATP-dependent dethiobiotin synthetase BioD from Bradyrhizobium diazoefficiens (strain JCM 10833 / BCRC 13528 / IAM 13628 / NBRC 14792 / USDA 110).